We begin with the raw amino-acid sequence, 920 residues long: Protein FAN (920 aa).

The GRAM domain maps to 176-247 (RLARTSFDKN…QDVRRIYKRR (72 aa)). A BEACH-type PH domain is found at 189 to 286 (SVSEKLHMEC…DRDDLYFYIA (98 aa)). The 286-residue stretch at 290-575 (EHHAAEHTAE…QLFVTPHPRR (286 aa)) folds into the BEACH domain. WD repeat units lie at residues 631–661 (IHKE…KMFS), 673–703 (FSNM…YFYS), 715–743 (GHDD…KVWS), 764–794 (EHDV…NIWD), 806–836 (CHSG…NVID), and 887–917 (GHTG…MFWK).

Functionally, couples the p55 TNF-receptor (TNF-R55 / TNFR1) to neutral sphingomyelinase (N-SMASE). Specifically binds to the N-smase activation domain of TNF-R55. May regulate ceramide production by N-SMASE. In Mus musculus (Mouse), this protein is Protein FAN (Nsmaf).